The chain runs to 941 residues: Lysine-specific demethylase 7A (941 aa).

The PHD-type zinc finger occupies 37-88 (PVYCVCRQPYDVNRFMIECDICKDWFHGSCVGVEEHHAVDIDLYHCPNCAVL). Residues 97 to 114 (RRNWHRHDYTEIDDGSKP) form a linker region. A JmjC domain is found at 230 to 386 (FSDTKMSELV…MQLRCYEMEK (157 aa)). Residue Thr-279 coordinates substrate. Positions 282 and 284 each coordinate Fe cation. Lys-299 is a binding site for substrate. His-354 is a Fe cation binding site. Disordered regions lie at residues 597–633 (QSLY…EHEE), 677–700 (TTEE…KEES), and 819–921 (QDLS…MATA). At Ser-604 the chain carries Phosphoserine. 2 stretches are compositionally biased toward basic and acidic residues: residues 618–633 (MKIE…EHEE) and 685–700 (GDEK…KEES). A compositionally biased stretch (polar residues) spans 834-876 (SEISQRVQSRNYVDSSGSSLQNGKYMQNSNLTSGACQISNGSL).

The protein belongs to the JHDM1 histone demethylase family. JHDM1D subfamily. Fe(2+) is required as a cofactor.

Its subcellular location is the nucleus. The catalysed reaction is N(6),N(6)-dimethyl-L-lysyl(9)-[histone H3] + 2 2-oxoglutarate + 2 O2 = L-lysyl(9)-[histone H3] + 2 formaldehyde + 2 succinate + 2 CO2. It carries out the reaction N(6),N(6)-dimethyl-L-lysyl(27)-[histone H3] + 2 2-oxoglutarate + 2 O2 = L-lysyl(27)-[histone H3] + 2 formaldehyde + 2 succinate + 2 CO2. The enzyme catalyses N(6),N(6)-dimethyl-L-lysyl(36)-[histone H3] + 2-oxoglutarate + O2 = N(6)-methyl-L-lysyl(36)-[histone H3] + formaldehyde + succinate + CO2. It catalyses the reaction N(6)-methyl-L-lysyl(20)-[histone H4] + 2-oxoglutarate + O2 = L-lysyl(20)-[histone H4] + formaldehyde + succinate + CO2. Histone demethylase required for brain development. Specifically demethylates dimethylated 'Lys-9', 'Lys-27' and 'Lys-36' (H3K9me2, H3K27me2, H3K36me2, respectively) of histone H3 and monomethylated histone H4 'Lys-20' residue (H4K20Me1), thereby playing a central role in histone code. Specifically binds trimethylated 'Lys-4' of histone H3 (H3K4me3), affecting histone demethylase specificity: in presence of H3K4me3, it has no demethylase activity toward H3K9me2, while it has high activity toward H3K27me2. Demethylates H3K9me2 in absence of H3K4me3. Has activity toward H4K20Me1 only when nucleosome is used as a substrate and when not histone octamer is used as substrate. This chain is Lysine-specific demethylase 7A (KDM7A), found in Homo sapiens (Human).